We begin with the raw amino-acid sequence, 479 residues long: Ribosomal RNA small subunit methyltransferase F (479 aa).

S-adenosyl-L-methionine is bound by residues 125–131 (AAAPGSK), glutamate 149, aspartate 176, and aspartate 194. The Nucleophile role is filled by cysteine 247.

Belongs to the class I-like SAM-binding methyltransferase superfamily. RsmB/NOP family.

Its subcellular location is the cytoplasm. It catalyses the reaction cytidine(1407) in 16S rRNA + S-adenosyl-L-methionine = 5-methylcytidine(1407) in 16S rRNA + S-adenosyl-L-homocysteine + H(+). Specifically methylates the cytosine at position 1407 (m5C1407) of 16S rRNA. The chain is Ribosomal RNA small subunit methyltransferase F from Salmonella arizonae (strain ATCC BAA-731 / CDC346-86 / RSK2980).